The sequence spans 167 residues: ATP synthase subunit b (167 aa).

The chain crosses the membrane as a helical span at residues 7–25 (SFLLAVSFVIFIYLIYRPA).

It belongs to the ATPase B chain family. As to quaternary structure, F-type ATPases have 2 components, F(1) - the catalytic core - and F(0) - the membrane proton channel. F(1) has five subunits: alpha(3), beta(3), gamma(1), delta(1), epsilon(1). F(0) has three main subunits: a(1), b(2) and c(10-14). The alpha and beta chains form an alternating ring which encloses part of the gamma chain. F(1) is attached to F(0) by a central stalk formed by the gamma and epsilon chains, while a peripheral stalk is formed by the delta and b chains.

The protein resides in the cell inner membrane. In terms of biological role, f(1)F(0) ATP synthase produces ATP from ADP in the presence of a proton or sodium gradient. F-type ATPases consist of two structural domains, F(1) containing the extramembraneous catalytic core and F(0) containing the membrane proton channel, linked together by a central stalk and a peripheral stalk. During catalysis, ATP synthesis in the catalytic domain of F(1) is coupled via a rotary mechanism of the central stalk subunits to proton translocation. Its function is as follows. Component of the F(0) channel, it forms part of the peripheral stalk, linking F(1) to F(0). The chain is ATP synthase subunit b from Rickettsia typhi (strain ATCC VR-144 / Wilmington).